The following is a 348-amino-acid chain: D-alanine--D-alanine ligase (348 aa).

An ATP-grasp domain is found at 132–334; sequence KRILEVAGVP…YSDLIKELVV (203 aa). Position 162 to 217 (162 to 217) interacts with ATP; that stretch reads LEKLTFPVFVKPANMGSSVGISKAENESELRSAIDLALKYDSRILIEQGVVAREIE. Residues Asp-288, Glu-301, and Asn-303 each contribute to the Mg(2+) site.

It belongs to the D-alanine--D-alanine ligase family. The cofactor is Mg(2+). Mn(2+) serves as cofactor.

It is found in the cytoplasm. It carries out the reaction 2 D-alanine + ATP = D-alanyl-D-alanine + ADP + phosphate + H(+). Its pathway is cell wall biogenesis; peptidoglycan biosynthesis. Its function is as follows. Cell wall formation. The polypeptide is D-alanine--D-alanine ligase (Streptococcus thermophilus (strain ATCC BAA-491 / LMD-9)).